A 127-amino-acid polypeptide reads, in one-letter code: Large ribosomal subunit protein uL18 (127 aa).

Residues 1–26 are disordered; that stretch reads MASTLTVRKSLSDRAKARARRQARGR. The segment covering 17–26 has biased composition (basic residues); the sequence is ARARRQARGR.

It belongs to the universal ribosomal protein uL18 family. In terms of assembly, part of the 50S ribosomal subunit; part of the 5S rRNA/L5/L18/L25 subcomplex. Contacts the 5S and 23S rRNAs.

Functionally, this is one of the proteins that bind and probably mediate the attachment of the 5S RNA into the large ribosomal subunit, where it forms part of the central protuberance. This is Large ribosomal subunit protein uL18 from Cutibacterium acnes (strain DSM 16379 / KPA171202) (Propionibacterium acnes).